Here is a 55-residue protein sequence, read N- to C-terminus: Large ribosomal subunit protein bL33B (55 aa).

The protein belongs to the bacterial ribosomal protein bL33 family.

The sequence is that of Large ribosomal subunit protein bL33B from Mycobacteroides abscessus (strain ATCC 19977 / DSM 44196 / CCUG 20993 / CIP 104536 / JCM 13569 / NCTC 13031 / TMC 1543 / L948) (Mycobacterium abscessus).